A 156-amino-acid polypeptide reads, in one-letter code: RING finger protein 224 (156 aa).

The RING-type zinc finger occupies 23 to 70 (CIICYSAYDLSVHLPRRLYCGHTFCQACMQRLDMPAHEQHWIPCPQCR).

This is RING finger protein 224 (Rnf224) from Mus musculus (Mouse).